Consider the following 154-residue polypeptide: Myoglobin (154 aa).

Residues G2–K148 form the Globin domain. H65 lines the nitrite pocket. H65 contributes to the O2 binding site. H94 is a heme b binding site.

This sequence belongs to the globin family. Monomeric.

It is found in the cytoplasm. Its subcellular location is the sarcoplasm. It carries out the reaction Fe(III)-heme b-[protein] + nitric oxide + H2O = Fe(II)-heme b-[protein] + nitrite + 2 H(+). The enzyme catalyses H2O2 + AH2 = A + 2 H2O. In terms of biological role, monomeric heme protein which primary function is to store oxygen and facilitate its diffusion within muscle tissues. Reversibly binds oxygen through a pentacoordinated heme iron and enables its timely and efficient release as needed during periods of heightened demand. Depending on the oxidative conditions of tissues and cells, and in addition to its ability to bind oxygen, it also has a nitrite reductase activity whereby it regulates the production of bioactive nitric oxide. Under stress conditions, like hypoxia and anoxia, it also protects cells against reactive oxygen species thanks to its pseudoperoxidase activity. The sequence is that of Myoglobin (MB) from Caretta caretta (Loggerhead sea turtle).